The primary structure comprises 332 residues: GTP 3',8-cyclase (332 aa).

Residues 7-221 (SYDRLHDYVR…FDTCKDNGLA (215 aa)) enclose the Radical SAM core domain. R16 contacts GTP. C23 and C27 together coordinate [4Fe-4S] cluster. S-adenosyl-L-methionine is bound at residue Y29. C30 is a [4Fe-4S] cluster binding site. Residue R66 participates in GTP binding. G70 is an S-adenosyl-L-methionine binding site. T97 contributes to the GTP binding site. S121 lines the S-adenosyl-L-methionine pocket. K158 lines the GTP pocket. M192 is a binding site for S-adenosyl-L-methionine. [4Fe-4S] cluster-binding residues include C256 and C259. 261-263 (RLR) contacts GTP. A [4Fe-4S] cluster-binding site is contributed by C273.

The protein belongs to the radical SAM superfamily. MoaA family. In terms of assembly, monomer and homodimer. It depends on [4Fe-4S] cluster as a cofactor.

The enzyme catalyses GTP + AH2 + S-adenosyl-L-methionine = (8S)-3',8-cyclo-7,8-dihydroguanosine 5'-triphosphate + 5'-deoxyadenosine + L-methionine + A + H(+). Its pathway is cofactor biosynthesis; molybdopterin biosynthesis. In terms of biological role, catalyzes the cyclization of GTP to (8S)-3',8-cyclo-7,8-dihydroguanosine 5'-triphosphate. The protein is GTP 3',8-cyclase of Lactiplantibacillus plantarum (strain ATCC BAA-793 / NCIMB 8826 / WCFS1) (Lactobacillus plantarum).